A 586-amino-acid chain; its full sequence is Aspartate--tRNA(Asp/Asn) ligase (586 aa).

L-aspartate is bound at residue Glu172. An aspartate region spans residues 196–199 (QLYK). Arg218 is an L-aspartate binding site. ATP contacts are provided by residues 218-220 (RDE) and Gln227. An L-aspartate-binding site is contributed by His446. Glu480 contributes to the ATP binding site. Arg487 is an L-aspartate binding site. 532 to 535 (GIDR) provides a ligand contact to ATP.

Belongs to the class-II aminoacyl-tRNA synthetase family. Type 1 subfamily. In terms of assembly, homodimer.

It localises to the cytoplasm. It catalyses the reaction tRNA(Asx) + L-aspartate + ATP = L-aspartyl-tRNA(Asx) + AMP + diphosphate. Its function is as follows. Aspartyl-tRNA synthetase with relaxed tRNA specificity since it is able to aspartylate not only its cognate tRNA(Asp) but also tRNA(Asn). Reaction proceeds in two steps: L-aspartate is first activated by ATP to form Asp-AMP and then transferred to the acceptor end of tRNA(Asp/Asn). The sequence is that of Aspartate--tRNA(Asp/Asn) ligase from Borreliella afzelii (strain PKo) (Borrelia afzelii).